The chain runs to 413 residues: uncharacterized protein (413 aa).

Residue K265 is modified to N6-(pyridoxal phosphate)lysine.

The protein belongs to the threonine aldolase family. The cofactor is pyridoxal 5'-phosphate.

This is an uncharacterized protein from Caenorhabditis elegans.